We begin with the raw amino-acid sequence, 475 residues long: Alpha,alpha-trehalose-phosphate synthase [UDP-forming] (475 aa).

Tyr93 and Asp147 together coordinate D-glucose 6-phosphate. UDP-binding residues include Arg285 and Lys290. Positions 285 and 290 each coordinate UDP-alpha-D-glucose. D-glucose 6-phosphate is bound at residue Arg323. 384–392 (DGMNLVSYE) is a binding site for UDP-alpha-D-glucose. 388–392 (LVSYE) provides a ligand contact to UDP.

Belongs to the glycosyltransferase 20 family.

The catalysed reaction is D-glucose 6-phosphate + UDP-alpha-D-glucose = alpha,alpha-trehalose 6-phosphate + UDP + H(+). Its pathway is carbohydrate biosynthesis. In terms of biological role, synthase catalytic subunit of the trehalose synthase complex that catalyzes the production of trehalose from glucose-6-phosphate and UDP-alpha-D-glucose in a two step process. The sequence is that of Alpha,alpha-trehalose-phosphate synthase [UDP-forming] from Pichia angusta (Yeast).